A 319-amino-acid chain; its full sequence is Acetyl-coenzyme A carboxylase carboxyl transferase subunit alpha (319 aa).

The CoA carboxyltransferase C-terminal domain occupies 35–296 (NIDEEVHRLR…KAQLLADLAD (262 aa)).

It belongs to the AccA family. As to quaternary structure, acetyl-CoA carboxylase is a heterohexamer composed of biotin carboxyl carrier protein (AccB), biotin carboxylase (AccC) and two subunits each of ACCase subunit alpha (AccA) and ACCase subunit beta (AccD).

The protein resides in the cytoplasm. It catalyses the reaction N(6)-carboxybiotinyl-L-lysyl-[protein] + acetyl-CoA = N(6)-biotinyl-L-lysyl-[protein] + malonyl-CoA. It participates in lipid metabolism; malonyl-CoA biosynthesis; malonyl-CoA from acetyl-CoA: step 1/1. In terms of biological role, component of the acetyl coenzyme A carboxylase (ACC) complex. First, biotin carboxylase catalyzes the carboxylation of biotin on its carrier protein (BCCP) and then the CO(2) group is transferred by the carboxyltransferase to acetyl-CoA to form malonyl-CoA. This is Acetyl-coenzyme A carboxylase carboxyl transferase subunit alpha from Citrobacter koseri (strain ATCC BAA-895 / CDC 4225-83 / SGSC4696).